Reading from the N-terminus, the 302-residue chain is Acetylglutamate kinase (302 aa).

Residues 73–74 (GG), arginine 95, and asparagine 200 contribute to the substrate site.

This sequence belongs to the acetylglutamate kinase family. ArgB subfamily.

The protein localises to the cytoplasm. It carries out the reaction N-acetyl-L-glutamate + ATP = N-acetyl-L-glutamyl 5-phosphate + ADP. It participates in amino-acid biosynthesis; L-arginine biosynthesis; N(2)-acetyl-L-ornithine from L-glutamate: step 2/4. Its function is as follows. Catalyzes the ATP-dependent phosphorylation of N-acetyl-L-glutamate. The sequence is that of Acetylglutamate kinase from Sphingopyxis alaskensis (strain DSM 13593 / LMG 18877 / RB2256) (Sphingomonas alaskensis).